Reading from the N-terminus, the 317-residue chain is Metaxin-1 (317 aa).

Residues lysine 38, lysine 41, lysine 78, and lysine 168 each participate in a glycyl lysine isopeptide (Lys-Gly) (interchain with G-Cter in ubiquitin) cross-link. A helical membrane pass occupies residues 272-292; sequence ILSVLAGLAAMVGYALLSGIV.

It belongs to the metaxin family. Interacts with MTX2/metaxin-2. Associates with the mitochondrial contact site and cristae organizing system (MICOS) complex, composed of at least MICOS10/MIC10, CHCHD3/MIC19, CHCHD6/MIC25, APOOL/MIC27, IMMT/MIC60, APOO/MIC23/MIC26 and QIL1/MIC13. This complex was also known under the names MINOS or MitOS complex. The MICOS complex associates with mitochondrial outer membrane proteins SAMM50, MTX1 and MTX2 (together described as components of the mitochondrial outer membrane sorting assembly machinery (SAM) complex) and DNAJC11, mitochondrial inner membrane protein TMEM11 and with HSPA9. The MICOS and SAM complexes together with DNAJC11 are part of a large protein complex spanning both membranes termed the mitochondrial intermembrane space bridging (MIB) complex. Interacts with ARMC1. Post-translationally, ubiquitinated by PRKN during mitophagy, leading to its degradation and enhancement of mitophagy. Deubiquitinated by USP30. As to expression, ubiquitous. Higher levels are seen in the kidney as compared to other tissues.

It localises to the mitochondrion outer membrane. In terms of biological role, involved in transport of proteins into the mitochondrion. Essential for embryonic development. This is Metaxin-1 (Mtx1) from Mus musculus (Mouse).